A 103-amino-acid polypeptide reads, in one-letter code: Small ribosomal subunit protein uS10 (103 aa).

It belongs to the universal ribosomal protein uS10 family. Part of the 30S ribosomal subunit.

Involved in the binding of tRNA to the ribosomes. The protein is Small ribosomal subunit protein uS10 of Shewanella amazonensis (strain ATCC BAA-1098 / SB2B).